We begin with the raw amino-acid sequence, 329 residues long: Chlorophyllase-1, chloroplastic (329 aa).

A chloroplast-targeting transit peptide spans 1–21 (MAAMVDSKPAASVQGTPLLAT). The GXSXG motif lies at 145-149 (GHSRG). The active-site Nucleophile is the S147. Residues D169 and H242 each act as charge relay system in the active site.

Belongs to the AB hydrolase superfamily. Lipase family.

Its subcellular location is the plastid. The protein resides in the chloroplast. The enzyme catalyses a chlorophyll + H2O = a chlorophyllide + phytol + H(+). It functions in the pathway porphyrin-containing compound metabolism; chlorophyll degradation. In terms of biological role, catalyzes the hydrolysis of ester bond in chlorophyll to yield chlorophyllide and phytol. In Citrus unshiu (Satsuma mandarin), this protein is Chlorophyllase-1, chloroplastic.